The primary structure comprises 326 residues: UPF0324 membrane protein PBPRB0970 (326 aa).

10 helical membrane passes run 27 to 49, 70 to 89, 94 to 116, 123 to 145, 155 to 177, 184 to 206, 216 to 235, 242 to 261, 271 to 290, and 303 to 325; these read FFIIALLCLLPIISSPVALILGF, LLAYSIIGLGFGIHLDQAIA, GFGLIVGSIFFTLIFGWFLTKAL, GHLIASGTAICGGSAIAAVAPAI, ALATVFVLNSIALFIFPAIGHLL, FGTWAAIAIHDTSSVVGAAGAYG, IKLARALWIVPIAFLSALLF, IGIPYFILFYCLAIVFAHFV, IFVASKRLLVVCLFLIGSGI, and LLLGVLLWVAIGVGSLSYILLNV.

Belongs to the UPF0324 family.

It localises to the cell membrane. The polypeptide is UPF0324 membrane protein PBPRB0970 (Photobacterium profundum (strain SS9)).